Here is a 617-residue protein sequence, read N- to C-terminus: Glutamyl-tRNA(Gln) amidotransferase subunit B, mitochondrial (617 aa).

Residues 1–56 (MPRIPTSVLGKYLLSGQISRQGCVGARQITRHSALPSAAVSVANSARLLHVSSETV) constitute a mitochondrion transit peptide. Positions 53–90 (SETVPPPPAQPVPLRKQLKDEAKKAKKQGKKKSKGDSQ) are disordered. The segment covering 76 to 85 (KAKKQGKKKS) has biased composition (basic residues).

This sequence belongs to the GatB/GatE family. GatB subfamily. As to quaternary structure, subunit of the heterotrimeric GatCAB amidotransferase (AdT) complex, composed of A, B and C subunits.

It localises to the mitochondrion. It catalyses the reaction L-glutamyl-tRNA(Gln) + L-glutamine + ATP + H2O = L-glutaminyl-tRNA(Gln) + L-glutamate + ADP + phosphate + H(+). Its function is as follows. Allows the formation of correctly charged Gln-tRNA(Gln) through the transamidation of misacylated Glu-tRNA(Gln) in the mitochondria. The reaction takes place in the presence of glutamine and ATP through an activated gamma-phospho-Glu-tRNA(Gln). In Fusarium vanettenii (strain ATCC MYA-4622 / CBS 123669 / FGSC 9596 / NRRL 45880 / 77-13-4) (Fusarium solani subsp. pisi), this protein is Glutamyl-tRNA(Gln) amidotransferase subunit B, mitochondrial.